The following is a 159-amino-acid chain: Ribosomal RNA large subunit methyltransferase H (159 aa).

S-adenosyl-L-methionine contacts are provided by residues leucine 76, glycine 108, and 127-132; that span reads FGLLTL.

Belongs to the RNA methyltransferase RlmH family. In terms of assembly, homodimer.

It localises to the cytoplasm. The catalysed reaction is pseudouridine(1915) in 23S rRNA + S-adenosyl-L-methionine = N(3)-methylpseudouridine(1915) in 23S rRNA + S-adenosyl-L-homocysteine + H(+). Specifically methylates the pseudouridine at position 1915 (m3Psi1915) in 23S rRNA. The protein is Ribosomal RNA large subunit methyltransferase H of Leuconostoc citreum (strain KM20).